The chain runs to 259 residues: 5'-nucleotidase SurE (259 aa).

Positions 8, 9, 41, and 93 each coordinate a divalent metal cation.

This sequence belongs to the SurE nucleotidase family. A divalent metal cation serves as cofactor.

The protein resides in the cytoplasm. The enzyme catalyses a ribonucleoside 5'-phosphate + H2O = a ribonucleoside + phosphate. Functionally, nucleotidase that shows phosphatase activity on nucleoside 5'-monophosphates. The protein is 5'-nucleotidase SurE of Verminephrobacter eiseniae (strain EF01-2).